Here is a 358-residue protein sequence, read N- to C-terminus: Alanine racemase (358 aa).

The Proton acceptor; specific for D-alanine role is filled by Lys35. An N6-(pyridoxal phosphate)lysine modification is found at Lys35. Arg130 contributes to the substrate binding site. Tyr255 acts as the Proton acceptor; specific for L-alanine in catalysis. Met303 is a binding site for substrate.

Belongs to the alanine racemase family. It depends on pyridoxal 5'-phosphate as a cofactor.

It catalyses the reaction L-alanine = D-alanine. It participates in amino-acid biosynthesis; D-alanine biosynthesis; D-alanine from L-alanine: step 1/1. Catalyzes the interconversion of L-alanine and D-alanine. May also act on other amino acids. The chain is Alanine racemase (alr) from Shewanella sp. (strain MR-4).